Reading from the N-terminus, the 2531-residue chain is MASLALRINIVDQNNVKTMQFEPSMIVYDACKMIRERIGEKPAAGQGYGLFLANEDPKRGVWLESGRTLDFYLLKPGDLLEYKNKMRPLRVRMMDESLKTVLVDDSFTVDQLVKTVCDRIGITNNEEFSLVCEDEEATPKKAAPPQIRNQKKMDELKKKLHTEDDVNWLSHDKTLRSQGISESQVLLLRKKFFFSDQNVDRNDPVQLNQLYAQARDAIVDGTHPCTYEEAINLAALQCQIVLGNHDSGKHKPGYITEELGSYLPREYVKAKGVERRVFTEHAKFTGLSQLNAKFRYIQVVRSLKTYGVTFFLVKEKMKGKNKLAPRLLGITRESIMRVDEKTKEVMKTWPLTTVRRWAASPNSFTLDFGDYSESYYSVQTTEGEQISRLIAGYIDIILKKKRATDRKVPEVEDETTLTEDLVLPARATQVSYVTSTSDRGEEGQVAHPGVLRAAGESGALFVPGDFLEGSHIQRQAAQTPGYSPAQQALQSSIAKGLGCADVAINELEAPTQLPPLGSDPQSLKWKQNTLDVSRQNVGSQLAAMTAAAAQMVGLTGADPADIDYTAVGAAVTTLSSNLTELSKGVRMIAALQGNSHDGEKLLEAARGLAGAVRHLLKSAEPSENQNRKDLLDAAAALGISGTQLMALMGDPDVTQEVQDALLSKAKAVAVATSGLVQNAKMVAGKCPDSTLQSSVITATKGTATATSQLVACTKIVASTITNPLCQEQLINSAKQVAGAVEGTVSSAQNACSDDDALRELGMSATKVTDALQDLLRYIRDIEAGGLRGGKYEEQIEMILAATERLINSLGNAQETVKSAKTVAMATSQMVSGVKDEASGLSDEDAKRRLLAAARGLADATAKMVDAAKVSARDPSNVEAQAALKAATEDLRAAVNAAANNALKKKLIKKLEVAAKHTAAAATQCIAAAQGAGPTNRNQSSQQQLLGNCKTVADHIGRLVQAVRASMANPESPSSQLGLINASQAMIQPCGKMIAASKAAVPTIGDQAAALQLANFAKQTATCLAELRTAAGKAAEACGSLEIESAIDVVRQLEADLLSVQRTAASGKFLPLPGETAESCALELGATSKTVGASMAQLLTAAAQGNENYTGIAARDTANALKVLSGSVRGVAAATDDRSAQEQIIVTAIQVMAHSRRLIEEAKKAIASPTNPENQSRLAQAAKAVSQALNQVINCLPGQRDVDAAIKDIAAASVALTTGQFPSAGGQSFQDVQTSLSVSSAALNVSASELVANSRGTHMQLAQSSQKFAGKYKTMLHSGLMLAGLSKEKAARSKIVGYLRSVSMSSSKLLLAAKALSADPNAPNVKNNLAAAARGVTDAINALVTVCTASAPGQKECDNALRKIQTVGGMLANPVEPVNDNSYFVCLDAVMENSKILGEAMGDITKHAKGERHDEFGSAVSTAASAVCTLTESAAQAAYLVAISDSSSTAAISGLVDTSQFARAQQAIREACEQLLNPSSAQQQVLSSATVIAKHTSGLCNACKIASGKTKNPVAKRKFVQSAKDVATSTANLVKSIKALAGTLNDGNRGDCAKTTKPLLEAIDDLVEFASAAEFASVPAQISPEARSAQAPILVAGNNMLIASSSLISSAKNLAVNPRDAATWQLLASHSKAVSDAIRRLVAAVKDKSPGQAECDQAIELLNMAINEVDQATLAAISSKLTPSSQSTLQGFHTQMMGGVSEISDLIEPVALAAKGDAEKLGHMVTNVVSYFVPLSKAAVGAASKTTNPDRQMAVLEQTKTLAESALQLMYAAKESGGNPAAAAAGAHANINEAAGNMTEAVKDLKGTLEMAASEAGLTAGMVDTIHKAAGTLDDPIHGEVSKSFGEYQESMVHSAKIIILKAQDMVGRAGTSPGELGVISKDATTSYCALATDCRGALATADDDVTGARLKAACQQLGDALGDLIQCAGSVQSNPTDAIGRKELSDCAKKVGSKVNFVLAALQAGAKGTQACINAVADVSGIVGDLDTSVMFATAGVLNPDREGDTFGEHREDILKTAKTLVEDTKTLVSGAAASQEQLAKAAVDAVGTITRLADHVKKGAAALTSEDQEAQVLLLNAVRDVASSLGALITATKNASGKSVQDPAMEHLRTCAKAMVSNVSSLLKTVKSVEDEAARGARALESAIDAINAQLEELLSPNEPGRDASPEDIIRVTKGVTLATAKAVAAGNSGRQDDVTASANLGRKAIIDMMLTTKAAALKAESEDSKIRSITAAKECTAAFRSLLELVHSILMKPSHDKKQKLTAYSKEVATCVSEVVQAAEVLKGTDWVDPSDPNIIAENELLNAAASIEAAAKKLALLKPREKKHEADETLSFDEQILEAARAIAAATGALIKSATTAQRELVAQGRLRPGVPGSDDSQWAEGLVSAARMVAAATQSLCEAANSAVQGVSSEEKLIASAKAVAASTAQLLLACQVKADADSENFKRLHKAGGAVKRAAENLVTAAKRSSEEGDDEEVSGGGQERFVGGIAREIEAQEAILRKERELDEAKRQLKKIRHDKYKRHGQDEP.

The FERM domain occupies R87 to K401. The tract at residues G598–P621 is interaction with VIN1. One can recognise an I/LWEQ domain in the interval T2287–H2526. The segment at A2466–E2485 is disordered.

As to quaternary structure, interacts with VIN1 (vinculin); the interaction facilitates VIN1 binding to F-actin.

It is found in the cytoplasm. It localises to the cytoskeleton. The protein localises to the cell cortex. Probably involved in connections of major cytoskeletal structures to the plasma membrane. The chain is Talin from Oscarella pearsei (Sponge).